The primary structure comprises 186 residues: MDSFSTKNLALQAQKKLMSKMATKTVANLFIDDTSSEVLDELYRVTKEYTRNRKEAQKIIKNLIKMVVKLGVLYRNGQFNNEELALVERFRKKVHTLAMTAVSFYQIDFTFDRRVMSNLLNDCRELLHQAINRHLTAKSHARINHVFNHFADCDFLATLYGPSEVYRGHLQKICEGVNKMLDEGNL.

Residues 37 to 70 (EVLDELYRVTKEYTRNRKEAQKIIKNLIKMVVKL) adopt a coiled-coil conformation.

Belongs to the TNFAIP8 family.

It localises to the cytoplasm. This chain is Tumor necrosis factor alpha-induced protein 8-like protein 1 (tnfaip8l1), found in Danio rerio (Zebrafish).